A 489-amino-acid polypeptide reads, in one-letter code: 3-octaprenyl-4-hydroxybenzoate carboxy-lyase (489 aa).

Residue Asn-172 participates in Mn(2+) binding. Residues 175 to 177 (IYR), 189 to 191 (RWL), and 194 to 195 (RG) each bind prenylated FMN. Glu-238 provides a ligand contact to Mn(2+). Asp-287 acts as the Proton donor in catalysis.

It belongs to the UbiD family. Homohexamer. Prenylated FMN serves as cofactor. The cofactor is Mn(2+).

The protein resides in the cell membrane. It catalyses the reaction a 4-hydroxy-3-(all-trans-polyprenyl)benzoate + H(+) = a 2-(all-trans-polyprenyl)phenol + CO2. It functions in the pathway cofactor biosynthesis; ubiquinone biosynthesis. In terms of biological role, catalyzes the decarboxylation of 3-octaprenyl-4-hydroxy benzoate to 2-octaprenylphenol, an intermediate step in ubiquinone biosynthesis. The protein is 3-octaprenyl-4-hydroxybenzoate carboxy-lyase of Aeromonas salmonicida (strain A449).